The primary structure comprises 151 residues: uncharacterized protein (151 aa).

The stretch at 35–147 (GIFENERQKL…RETLQESLED (113 aa)) forms a coiled coil.

This is an uncharacterized protein from Helicobacter hepaticus (strain ATCC 51449 / 3B1).